We begin with the raw amino-acid sequence, 344 residues long: Methionine import ATP-binding protein MetN (344 aa).

The ABC transporter domain maps to 2–241 (IELQGLSQRF…PQHDVTRAMI (240 aa)). 38-45 (GRSGAGKS) contributes to the ATP binding site.

The protein belongs to the ABC transporter superfamily. Methionine importer (TC 3.A.1.24) family. The complex is composed of two ATP-binding proteins (MetN), two transmembrane proteins (MetI) and a solute-binding protein (MetQ).

Its subcellular location is the cell inner membrane. It carries out the reaction L-methionine(out) + ATP + H2O = L-methionine(in) + ADP + phosphate + H(+). It catalyses the reaction D-methionine(out) + ATP + H2O = D-methionine(in) + ADP + phosphate + H(+). In terms of biological role, part of the ABC transporter complex MetNIQ involved in methionine import. Responsible for energy coupling to the transport system. This Cupriavidus necator (strain ATCC 17699 / DSM 428 / KCTC 22496 / NCIMB 10442 / H16 / Stanier 337) (Ralstonia eutropha) protein is Methionine import ATP-binding protein MetN.